The chain runs to 428 residues: MSNIVIVGAQWGDEGKGKIADTLAEKSDLVVRYQGGNNAGHTLVVNGKKTFLHLIPSGVLHKHTKCVIGHGVVVDPIALDTEITRLQDTGIEISANNLFVSESCTVITSYHKLLDAVRENSTTEKIGTTGKGIGPAYEDKVSRKGIKFKHLFDKDVLRSRLALSLAEKETLFKDLYKVEYPSLEEEFERLYTLGQKLKQYSADTFSIIDQAVSTGKNVVYEGAQGVLLDIDYGTYPFVTSSNTSVAGVYSGATTAGHNLDHVIGITKAYTTRVGEGPFPTELFDDTGLFIQKKGGEIGVTTGRIRRCGWLDLPLLKYSAKCSNLTSIALTKVDVLSDLDTLKICIGYKYEGKEIFCAYPGIDLYKVEPILVDMEPFSLDEVVTKENMPSALKTYLRTIENHIGIPISSLAYGPSREQILFFEDYFKKG.

Residues 12–18 and 40–42 each bind GTP; these read GDEGKGK and GHT. Asp-13 acts as the Proton acceptor in catalysis. 2 residues coordinate Mg(2+): Asp-13 and Gly-40. IMP contacts are provided by residues 13–16, 38–41, Thr-129, Arg-143, Gln-224, Thr-239, and Arg-303; these read DEGK and NAGH. His-41 serves as the catalytic Proton donor. 299-305 is a binding site for substrate; that stretch reads VTTGRIR. GTP contacts are provided by residues Arg-305, 331 to 333, and 410 to 412; these read KVD and AYG.

The protein belongs to the adenylosuccinate synthetase family. Homodimer. It depends on Mg(2+) as a cofactor.

The protein localises to the cytoplasm. It catalyses the reaction IMP + L-aspartate + GTP = N(6)-(1,2-dicarboxyethyl)-AMP + GDP + phosphate + 2 H(+). The protein operates within purine metabolism; AMP biosynthesis via de novo pathway; AMP from IMP: step 1/2. Functionally, plays an important role in the de novo pathway of purine nucleotide biosynthesis. Catalyzes the first committed step in the biosynthesis of AMP from IMP. This Francisella philomiragia subsp. philomiragia (strain ATCC 25017 / CCUG 19701 / FSC 153 / O#319-036) protein is Adenylosuccinate synthetase.